A 207-amino-acid polypeptide reads, in one-letter code: Outer-membrane lipoprotein LolB (207 aa).

The first 21 residues, 1 to 21, serve as a signal peptide directing secretion; sequence MPLPDFRLIRLLPLAALVLTA. A lipid anchor (N-palmitoyl cysteine) is attached at cysteine 22. A lipid anchor (S-diacylglycerol cysteine) is attached at cysteine 22.

The protein belongs to the LolB family. Monomer.

The protein localises to the cell outer membrane. In terms of biological role, plays a critical role in the incorporation of lipoproteins in the outer membrane after they are released by the LolA protein. This chain is Outer-membrane lipoprotein LolB, found in Shigella dysenteriae serotype 1 (strain Sd197).